Here is a 146-residue protein sequence, read N- to C-terminus: Hemoglobin subunit beta (146 aa).

Residue Val-1 is modified to N-acetylvaline. The region spanning 2–146 (ELTAEEKAAV…VANALAHKYH (145 aa)) is the Globin domain. Ser-44 is modified (phosphoserine). Position 59 is an N6-acetyllysine (Lys-59). His-63 lines the heme b pocket. At Lys-82 the chain carries N6-acetyllysine. His-92 is a binding site for heme b. Cys-93 is subject to S-nitrosocysteine. N6-acetyllysine is present on Lys-144.

It belongs to the globin family. In terms of assembly, heterotetramer of two alpha chains and two beta chains. As to expression, red blood cells.

In terms of biological role, involved in oxygen transport from the lung to the various peripheral tissues. This chain is Hemoglobin subunit beta (HBB), found in Ceratotherium simum (White rhinoceros).